The following is a 417-amino-acid chain: Putative nickel insertion protein (417 aa).

A disordered region spans residues 69–99; that stretch reads HEHHHDHGHHHHGHGHHHDHTHDHHHHHEHR. The segment covering 74-99 has biased composition (basic residues); the sequence is DHGHHHHGHGHHHDHTHDHHHHHEHR.

It belongs to the LarC family.

This is Putative nickel insertion protein from Maridesulfovibrio salexigens (strain ATCC 14822 / DSM 2638 / NCIMB 8403 / VKM B-1763) (Desulfovibrio salexigens).